A 182-amino-acid chain; its full sequence is Succinate dehydrogenase [ubiquinone] cytochrome b small subunit, mitochondrial (182 aa).

Residues 1 to 71 (MSLSLLLRGA…SAPRMASAGS (71 aa)) are Mitochondrial matrix-facing. A helical membrane pass occupies residues 72 to 96 (SHTLLWTVERIVSAGLLAVIPAAFI). Residues 97-101 (APSQV) are Mitochondrial intermembrane-facing. The helical transmembrane segment at 102–122 (LDALMAISVVIHTHWGVEAMV) threads the bilayer. His113 is a heme binding site. Residues 123 to 135 (VDYMRPSVVGNVL) are Mitochondrial matrix-facing. Position 125 (Tyr125) interacts with a ubiquinone. A helical transmembrane segment spans residues 136–157 (PKVAHIALIIISVATLGGLFYF). Residues 158–182 (IQNDVGLANGIKRFWAIKGKDAEKA) are Mitochondrial intermembrane-facing.

Belongs to the CybS family. Forms part of complex II containing four subunits: a flavoprotein (FP), an iron-sulfur protein (IP) and a cytochrome b composed of a large and a small subunit.

The protein resides in the mitochondrion inner membrane. It participates in carbohydrate metabolism; tricarboxylic acid cycle. Functionally, membrane-anchoring subunit of succinate dehydrogenase (SDH) that is involved in complex II of the mitochondrial electron transport chain and is responsible for transferring electrons from succinate to ubiquinone (coenzyme Q). This chain is Succinate dehydrogenase [ubiquinone] cytochrome b small subunit, mitochondrial, found in Drosophila melanogaster (Fruit fly).